A 165-amino-acid polypeptide reads, in one-letter code: Neurotrophin-3 (165 aa).

Residues 1 to 3 form the signal peptide; sequence IQS. A propeptide spanning residues 4 to 119 is cleaved from the precursor; sequence TSMDQGSLSE…VLNQTSRRKR (116 aa). Residue Asn112 is glycosylated (N-linked (GlcNAc...) asparagine).

It belongs to the NGF-beta family.

The protein resides in the secreted. Functionally, seems to promote the survival of visceral and proprioceptive sensory neurons. This Morelia spilota (Carpet python) protein is Neurotrophin-3 (NTF3).